The following is a 350-amino-acid chain: Transcription factor MYB102 (350 aa).

HTH myb-type domains lie at 9-65 (KNGL…RPDI) and 66-116 (KRGR…RKKL). DNA-binding regions (H-T-H motif) lie at residues 37–61 (WRTLPKNAGLQRCGKSCRLRWTNYL) and 89–112 (WSAIAARLPGRTDNEIKNFWNTHI).

As to expression, expressed in rosette leaves, cauline leaves and flowers.

It localises to the nucleus. Its function is as follows. Probable transcription factor that may function in osmotic stress and wounding signaling pathways. Contributes to basal resistance against the herbivore Pieris rapae (white cabbage butterfly) feeding. The sequence is that of Transcription factor MYB102 from Arabidopsis thaliana (Mouse-ear cress).